The following is a 208-amino-acid chain: MLRTIFLLSLLFALSNASVQDFCVANLKRAETPAGYPCIRPIHVKATDFVFSGLGTPGNTTNIINAAVTPAFAAQFPGLNGLGLSTARLDLAPKGVIPMHTHPGASEVLFVLTGSITAGFVSSANAVYVQTLKPGQVMVFPQGLLHFQINAGKSSASAVVTFNSANPGLQILDFALFANSLPTELVVGTTFLDATTVKKLKGVLGGTG.

An N-terminal signal peptide occupies residues 1–18; the sequence is MLRTIFLLSLLFALSNAS. A disulfide bridge links Cys23 with Cys38. Positions 52 to 198 constitute a Cupin type-1 domain; the sequence is SGLGTPGNTT…TTFLDATTVK (147 aa). Asn59 is a glycosylation site (N-linked (GlcNAc...) asparagine). Mn(2+) contacts are provided by His100, His102, Glu107, and His146.

Belongs to the germin family. As to quaternary structure, may not form oligomer. As to expression, expressed during germination, and also in green shoots, etiolated seedlings and whole seedlings.

The protein resides in the secreted. The protein localises to the extracellular space. Its subcellular location is the apoplast. May play a role in plant defense. Probably has no oxalate oxidase activity even if the active site is conserved. The chain is Germin-like protein subfamily 3 member 1 (GLP1) from Arabidopsis thaliana (Mouse-ear cress).